Reading from the N-terminus, the 262-residue chain is Type III pantothenate kinase (262 aa).

Residue 10–17 coordinates ATP; that stretch reads DIGNTTTV. Position 110 to 113 (110 to 113) interacts with substrate; it reads GADR. Residue Asp112 is the Proton acceptor of the active site. Residue Asp134 participates in K(+) binding. Thr137 serves as a coordination point for ATP. Thr189 serves as a coordination point for substrate.

This sequence belongs to the type III pantothenate kinase family. As to quaternary structure, homodimer. NH4(+) serves as cofactor. The cofactor is K(+).

It is found in the cytoplasm. The catalysed reaction is (R)-pantothenate + ATP = (R)-4'-phosphopantothenate + ADP + H(+). The protein operates within cofactor biosynthesis; coenzyme A biosynthesis; CoA from (R)-pantothenate: step 1/5. In terms of biological role, catalyzes the phosphorylation of pantothenate (Pan), the first step in CoA biosynthesis. The sequence is that of Type III pantothenate kinase from Deinococcus radiodurans (strain ATCC 13939 / DSM 20539 / JCM 16871 / CCUG 27074 / LMG 4051 / NBRC 15346 / NCIMB 9279 / VKM B-1422 / R1).